The following is a 56-amino-acid chain: Small ribosomal subunit protein uS14 (56 aa).

Zn(2+) contacts are provided by C21, C24, C39, and C42.

Belongs to the universal ribosomal protein uS14 family. In terms of assembly, component of the 40S small ribosomal subunit. Requires Zn(2+) as cofactor.

The protein resides in the cytoplasm. The protein localises to the cytosol. It is found in the rough endoplasmic reticulum. This is Small ribosomal subunit protein uS14 (RpS29) from Bombyx mori (Silk moth).